A 250-amino-acid chain; its full sequence is Leucyl/phenylalanyl-tRNA--protein transferase (250 aa).

A disordered region spans residues 1 to 21 (MTPFRRPTVLGTSASAPFPPA).

This sequence belongs to the L/F-transferase family.

Its subcellular location is the cytoplasm. It carries out the reaction N-terminal L-lysyl-[protein] + L-leucyl-tRNA(Leu) = N-terminal L-leucyl-L-lysyl-[protein] + tRNA(Leu) + H(+). It catalyses the reaction N-terminal L-arginyl-[protein] + L-leucyl-tRNA(Leu) = N-terminal L-leucyl-L-arginyl-[protein] + tRNA(Leu) + H(+). The catalysed reaction is L-phenylalanyl-tRNA(Phe) + an N-terminal L-alpha-aminoacyl-[protein] = an N-terminal L-phenylalanyl-L-alpha-aminoacyl-[protein] + tRNA(Phe). Functions in the N-end rule pathway of protein degradation where it conjugates Leu, Phe and, less efficiently, Met from aminoacyl-tRNAs to the N-termini of proteins containing an N-terminal arginine or lysine. This is Leucyl/phenylalanyl-tRNA--protein transferase from Xanthomonas euvesicatoria pv. vesicatoria (strain 85-10) (Xanthomonas campestris pv. vesicatoria).